Consider the following 463-residue polypeptide: Bifunctional protein HldE (463 aa).

Residues 1–315 (MKKILVIGDL…LILNQTHPKI (315 aa)) are ribokinase. 191–194 (NRAE) contacts ATP. Aspartate 260 is a catalytic residue. The cytidylyltransferase stretch occupies residues 334 to 463 (FTNGCFDILH…IEKIKRTHND (130 aa)).

It in the N-terminal section; belongs to the carbohydrate kinase PfkB family. This sequence in the C-terminal section; belongs to the cytidylyltransferase family. As to quaternary structure, homodimer.

The enzyme catalyses D-glycero-beta-D-manno-heptose 7-phosphate + ATP = D-glycero-beta-D-manno-heptose 1,7-bisphosphate + ADP + H(+). The catalysed reaction is D-glycero-beta-D-manno-heptose 1-phosphate + ATP + H(+) = ADP-D-glycero-beta-D-manno-heptose + diphosphate. Its pathway is nucleotide-sugar biosynthesis; ADP-L-glycero-beta-D-manno-heptose biosynthesis; ADP-L-glycero-beta-D-manno-heptose from D-glycero-beta-D-manno-heptose 7-phosphate: step 1/4. It participates in nucleotide-sugar biosynthesis; ADP-L-glycero-beta-D-manno-heptose biosynthesis; ADP-L-glycero-beta-D-manno-heptose from D-glycero-beta-D-manno-heptose 7-phosphate: step 3/4. It functions in the pathway bacterial outer membrane biogenesis; LPS core biosynthesis. In terms of biological role, catalyzes the phosphorylation of D-glycero-D-manno-heptose 7-phosphate at the C-1 position to selectively form D-glycero-beta-D-manno-heptose-1,7-bisphosphate. Functionally, catalyzes the ADP transfer from ATP to D-glycero-beta-D-manno-heptose 1-phosphate, yielding ADP-D-glycero-beta-D-manno-heptose. This Helicobacter pylori (strain J99 / ATCC 700824) (Campylobacter pylori J99) protein is Bifunctional protein HldE.